The chain runs to 738 residues: uncharacterized protein (738 aa).

3 stretches are compositionally biased toward polar residues: residues methionine 1 to serine 34, threonine 140 to proline 169, and lysine 177 to aspartate 197. Disordered regions lie at residues methionine 1–isoleucine 51 and threonine 140–aspartate 197. One can recognise an RRM domain in the interval serine 363 to isoleucine 434. The segment at tyrosine 466–arginine 487 is disordered.

This is an uncharacterized protein from Schizosaccharomyces pombe (strain 972 / ATCC 24843) (Fission yeast).